The sequence spans 302 residues: Methionyl-tRNA formyltransferase (302 aa).

A (6S)-5,6,7,8-tetrahydrofolate-binding site is contributed by 107 to 110 (SLLP).

Belongs to the Fmt family.

The catalysed reaction is L-methionyl-tRNA(fMet) + (6R)-10-formyltetrahydrofolate = N-formyl-L-methionyl-tRNA(fMet) + (6S)-5,6,7,8-tetrahydrofolate + H(+). Attaches a formyl group to the free amino group of methionyl-tRNA(fMet). The formyl group appears to play a dual role in the initiator identity of N-formylmethionyl-tRNA by promoting its recognition by IF2 and preventing the misappropriation of this tRNA by the elongation apparatus. The sequence is that of Methionyl-tRNA formyltransferase from Leifsonia xyli subsp. xyli (strain CTCB07).